We begin with the raw amino-acid sequence, 400 residues long: MTDMPNRKPPLSGIRVIELARVLAGPWAGQMLADMGADVIKVENPEGGDDTRAWGPPFVESADGENLSAAYYHATNRGKRSIVADLKTPEGCALVRRLVRTADVVIENFKRDGLAKYGLDYESLRVLNPKLIYCSITGFGQTGPYADFAGYDYIVQGMSGFMSITGEPDGQPMKAGVAVADIFTGIYSVSAIQAALIHAMRSGEGQHIDMALLDVQSAVLANQNMNYLISGRPPIRLGNAHPNISPYEVVPTADGFLILAVGNDGQFRRLCNILGIGAIADDERYATNKARVAHKVEVRQIISTETLKWNKRDLLTACETNAVPAGPINSIEEMFADPQVQARGLRVDLEAEDGTVIPGVRTPIIMSQTPLRYERPSPKLGEHQAQVLAELETIERTATP.

The active-site Nucleophile is the Asp181.

The protein belongs to the CoA-transferase III family.

The enzyme catalyses glutarate + succinyl-CoA = glutaryl-CoA + succinate. The protein operates within amino-acid degradation. It functions in the pathway cofactor biosynthesis; biotin biosynthesis. Functionally, is involved in L-lysine degradation and provides glutaryl-CoA for biotin synthesis. Catalyzes the conversion of glutarate to glutaryl-CoA via the transfer of CoA from succinyl-CoA. The sequence is that of Succinate--glutarate CoA-transferase from Agrobacterium fabrum (strain C58 / ATCC 33970) (Agrobacterium tumefaciens (strain C58)).